The sequence spans 197 residues: Probable GTP-binding protein EngB (197 aa).

The EngB-type G domain maps to 26-197 (ELPEIALAGR…EAWDAILEKL (172 aa)). Residues 34 to 41 (GRSNVGKS), 61 to 65 (GKTQL), 79 to 82 (DVPG), 146 to 149 (TKAD), and 178 to 180 (FSS) contribute to the GTP site. Ser41 and Thr63 together coordinate Mg(2+).

This sequence belongs to the TRAFAC class TrmE-Era-EngA-EngB-Septin-like GTPase superfamily. EngB GTPase family. Mg(2+) is required as a cofactor.

Its function is as follows. Necessary for normal cell division and for the maintenance of normal septation. The polypeptide is Probable GTP-binding protein EngB (Streptococcus pneumoniae (strain CGSP14)).